Consider the following 302-residue polypeptide: Cell division protein FtsQ (302 aa).

Topologically, residues M1–R43 are cytoplasmic. The chain crosses the membrane as a helical span at residues A44–G64. At R65–G302 the chain is on the periplasmic side. Residues F89–R156 enclose the POTRA domain.

Belongs to the FtsQ/DivIB family. FtsQ subfamily.

It localises to the cell inner membrane. In terms of biological role, essential cell division protein. The polypeptide is Cell division protein FtsQ (Ketogulonicigenium vulgare (strain Y25)).